Reading from the N-terminus, the 213-residue chain is Uridine kinase (213 aa).

Residue 15-22 (GASASGKS) coordinates ATP.

It belongs to the uridine kinase family.

Its subcellular location is the cytoplasm. It catalyses the reaction uridine + ATP = UMP + ADP + H(+). It carries out the reaction cytidine + ATP = CMP + ADP + H(+). It functions in the pathway pyrimidine metabolism; CTP biosynthesis via salvage pathway; CTP from cytidine: step 1/3. Its pathway is pyrimidine metabolism; UMP biosynthesis via salvage pathway; UMP from uridine: step 1/1. This is Uridine kinase from Cronobacter sakazakii (strain ATCC BAA-894) (Enterobacter sakazakii).